We begin with the raw amino-acid sequence, 372 residues long: Biglycan (372 aa).

The first 19 residues, 1–19, serve as a signal peptide directing secretion; that stretch reads MPTMWPLWLLASLLALSQA. Residues 20–40 constitute a propeptide that is removed on maturation; the sequence is LPFEQKGFWDFTLDDGLPMLN. O-linked (Xyl...) (glycosaminoglycan) serine glycans are attached at residues Ser-45 and Ser-51. 2 disulfides stabilise this stretch: Cys-67-Cys-73 and Cys-71-Cys-80. LRR repeat units follow at residues 86–106, 107–130, 131–154, 155–175, 176–199, 200–224, 225–245, 246–269, 270–293, 294–316, 317–346, and 347–372; these read KAVP…NNEI, SELR…NNKI, SKIH…KNHL, VEIP…DNRI, RKVP…GNPL, ENSG…EAKL, TGIP…HNKI, QAIE…HNQI, RMIE…NNKL, SRVP…TNNI, TKVG…NNPV, and PYWE…NYKK. N-linked (GlcNAc...) asparagine glycosylation is found at Asn-274 and Asn-315. Cys-325 and Cys-358 are disulfide-bonded.

It belongs to the small leucine-rich proteoglycan (SLRP) family. SLRP class I subfamily. Homodimer. Forms a ternary complex with MFAP2 and ELN. Post-translationally, the two attached glycosaminoglycan chains can be either chondroitin sulfate or dermatan sulfate.

It is found in the secreted. The protein resides in the extracellular space. The protein localises to the extracellular matrix. May be involved in collagen fiber assembly. This is Biglycan (BGN) from Equus caballus (Horse).